The following is a 99-amino-acid chain: Small integral membrane protein 14 (99 aa).

The Lumenal segment spans residues Met1–Ser49. The chain crosses the membrane as a helical span at residues Gly50 to Leu70. Topologically, residues Arg71–Asp99 are cytoplasmic. Residues Gly77–Asp99 form a disordered region.

As to expression, ubiquitously expressed.

It localises to the endoplasmic reticulum membrane. The polypeptide is Small integral membrane protein 14 (Smim14) (Mus musculus (Mouse)).